Consider the following 238-residue polypeptide: Ribonuclease HII (238 aa).

One can recognise an RNase H type-2 domain in the interval 12–197; sequence GIVAGVDEAG…VLELLTDDLL (186 aa). Residues D18, E19, and D107 each coordinate a divalent metal cation.

The protein belongs to the RNase HII family. Mn(2+) serves as cofactor. The cofactor is Mg(2+).

Its subcellular location is the cytoplasm. It carries out the reaction Endonucleolytic cleavage to 5'-phosphomonoester.. In terms of biological role, endonuclease that specifically degrades the RNA of RNA-DNA hybrids. The chain is Ribonuclease HII (rnhB) from Thermotoga maritima (strain ATCC 43589 / DSM 3109 / JCM 10099 / NBRC 100826 / MSB8).